We begin with the raw amino-acid sequence, 632 residues long: Probable potassium transport system protein Kup 3 (632 aa).

12 consecutive transmembrane segments (helical) span residues L17–L37, L60–L80, T106–I126, P144–V164, F175–I195, A210–L230, W254–L274, A292–I312, I344–F364, L370–F390, L401–A421, and I426–T446.

Belongs to the HAK/KUP transporter (TC 2.A.72) family.

It is found in the cell inner membrane. It catalyses the reaction K(+)(in) + H(+)(in) = K(+)(out) + H(+)(out). Transport of potassium into the cell. Likely operates as a K(+):H(+) symporter. The chain is Probable potassium transport system protein Kup 3 from Rhizobium etli (strain ATCC 51251 / DSM 11541 / JCM 21823 / NBRC 15573 / CFN 42).